A 627-amino-acid chain; its full sequence is MPCVQAQYSPSPPGSTYATQTYGSEYTTEIMNPDYTKLTMDLGSTGIMATATTSLPSFSTFMEGYPSSCELKPSCLYQMPPSGPRPLIKMEEGREHGYHHHHHHHHHHHHHQQQQPSIPPPSGPEDEVLPSTSMYFKQSPPSTPTTPGFPPQAGALWDDELPSAPGCIAPGPLLDPQMKAVPPMAAAARFPIFFKPSPPHPPAPSPAGGHHLGYDPTAAAALSLPLGAAAAAGSQAAALEGHPYGLPLAKRTATLTFPPLGLTASPTASSLLGESPSLPSPPNRSSSSGEGTCAVCGDNAACQHYGVRTCEGCKGFFKRTVQKNAKYVCLANKNCPVDKRRRNRCQYCRFQKCLSVGMVKEVVRTDSLKGRRGRLPSKPKSPLQQEPSQPSPPSPPICMMNALVRALTDATPRDLDYSRYCPTDQATAGTDAEHVQQFYNLLTASIDVSRSWAEKIPGFTDLPKEDQTLLIESAFLELFVLRLSIRSNTAEDKFVFCNGLVLHRLQCLRGFGEWLDSIKDFSLNLQSLNLDIQALACLSALSMITERHGLKEPKRVEELCTKITSSLKDHQRKGQALEPSEPKVLRALVELRKICTQGLQRIFYLKLEDLVPPPSVIDKLFLDTLPF.

Residues 1 to 112 are activation function (AF)-1 domain; it reads MPCVQAQYSP…HHHHHHHHHQ (112 aa). Positions 1–139 are required for DNA-PK heterotrimer; that stretch reads MPCVQAQYSP…PSTSMYFKQS (139 aa). The tract at residues 1 to 292 is interaction with NCOA1, NCOA2, NCOA3 and KAT2B; that stretch reads MPCVQAQYSP…NRSSSSGEGT (292 aa). Disordered stretches follow at residues 96 to 162 and 268 to 289; these read HGYH…DELP and ASSL…SSSG. Over residues 97–112 the composition is skewed to basic residues; it reads GYHHHHHHHHHHHHHQ. A compositionally biased stretch (pro residues) spans 141–150; it reads PSTPTTPGFP. A compositionally biased stretch (low complexity) spans 269 to 288; it reads SSLLGESPSLPSPPNRSSSS. The segment at residues 290–365 is a DNA-binding region (nuclear receptor); that stretch reads EGTCAVCGDN…VGMVKEVVRT (76 aa). 2 NR C4-type zinc fingers span residues 293–313 and 329–353; these read CAVC…CEGC and CLAN…FQKC. The disordered stretch occupies residues 365-395; the sequence is TDSLKGRRGRLPSKPKSPLQQEPSQPSPPSP. Low complexity predominate over residues 378–388; sequence KPKSPLQQEPS. Residues 380–627 are interaction with KAT2B; sequence KSPLQQEPSQ…DKLFLDTLPF (248 aa). The 230-residue stretch at 395-624 folds into the NR LBD domain; it reads PPICMMNALV…SVIDKLFLDT (230 aa).

It belongs to the nuclear hormone receptor family. NR4 subfamily. As to quaternary structure, interacts with SIX3 (via homeobox); differentially regulates the transcriptional activities of NR4A3. Interacts with NCOA2; potentiates the activity of the NR4A3. Interacts with NCOA1, NCOA3, MED1 and KAT2B. Interacts with EP300 and NCOA2; mediates the recruitment of MED1 in the coactivator complex. Interacts with the constituents of DNA-PK heterotrimer PRKDC, XRCC6 and XRCC5; phosphorylates and prevents NR4A3 ubiquitinylation and degradation. Interacts with NR3C1 (via nuclear receptor DNA-binding domain); the interactions represses transcription activity of NR4A3 on the POMC promoter Nur response element (NurRE). Interacts with TRIM28; the interactions potentiates NR4A3 activity on NurRE promoter. Binds DNA as a monomer and homodimer. Interacts with PARP1; activates PARP1 by improving acetylation of PARP1 and suppressing the interaction between PARP1 and SIRT1. Phosphorylated by PRKDC. In terms of tissue distribution, ubiquitous. Highest levels of expression in brain. Widely expressed throughout the arcuate nucleus region of the hypothalamus, namely in AgRP neurons.

Its subcellular location is the nucleus. Functionally, transcriptional activator that binds to regulatory elements in promoter regions in a cell- and response element (target)-specific manner. Induces gene expression by binding as monomers to the NR4A1 response element (NBRE) 5'-AAAAGGTCA-3' site and as homodimers to the Nur response element (NurRE) site in the promoter of their regulated target genes. Plays a role in the regulation of proliferation, survival and differentiation of many different cell types and also in metabolism and inflammation. Mediates proliferation of vascular smooth muscle, myeloid progenitor cell and type B pancreatic cells; promotes mitogen-induced vascular smooth muscle cell proliferation through transactivation of SKP2 promoter by binding a NBRE site. Upon PDGF stimulation, stimulates vascular smooth muscle cell proliferation by regulating CCND1 and CCND2 expression. In islets, induces type B pancreatic cell proliferation through up-regulation of genes that activate cell cycle, as well as genes that cause degradation of the CDKN1A. Negatively regulates myeloid progenitor cell proliferation by repressing RUNX1 in a NBRE site-independent manner. During inner ear, plays a role as a key mediator of the proliferative growth phase of semicircular canal development. Also mediates survival of neuron and smooth muscle cells; mediates CREB-induced neuronal survival, and during hippocampus development, plays a critical role in pyramidal cell survival and axonal guidance. Is required for S phase entry of the cell cycle and survival of smooth muscle cells by inducing CCND1, resulting in RB1 phosphorylation. Binds to NBRE motif in CCND1 promoter, resulting in the activation of the promoter and CCND1 transcription. Also plays a role in inflammation; upon TNF stimulation, mediates monocyte adhesion by inducing the expression of VCAM1 and ICAM1 by binding to the NBRE consensus site. In mast cells activated by Fc-epsilon receptor cross-linking, promotes the synthesis and release of cytokines but impairs events leading to degranulation. Also plays a role in metabolism; by modulating feeding behavior; and by playing a role in energy balance by inhibiting the glucocorticoid-induced orexigenic neuropeptides AGRP expression, at least in part by forming a complex with activated NR3C1 on the AGRP- glucocorticoid response element (GRE), and thus weakening the DNA binding activity of NR3C1. Upon catecholamines stimulation, regulates gene expression that controls oxidative metabolism in skeletal muscle. Plays a role in glucose transport by regulating translocation of the SLC2A4 glucose transporter to the cell surface. Finally, during gastrulation plays a crucial role in the formation of anterior mesoderm by controlling cell migration. Inhibits adipogenesis. Also participates in cardiac hypertrophy by activating PARP1. The sequence is that of Nuclear receptor subfamily 4 group A member 3 (Nr4a3) from Mus musculus (Mouse).